Consider the following 596-residue polypeptide: Potassium-transporting ATPase potassium-binding subunit (596 aa).

Helical transmembrane passes span 6–26 (ILTIVLYVGVLLLLAYPLGGF), 67–87 (AIGLIAFNILGVLFVFGLQLF), 136–156 (GLTTQNFLSAASGIVVVIALI), 177–197 (ITLYVLVPISVVYAIFLVGQG), 283–303 (LSNFIQILSIFLIPAALCFTF), 314–334 (WVVLVTMILIFLTVTFAAVHF), 413–433 (GLYGMLVFAILAVFIAGLMIG), 450–470 (MVAIAILVTPILALVGTAIAV), 518–538 (MLAIAMWFGRFGVIVPVLALA), and 560–580 (LFIVLLAGTVILVGALNYVPA).

The protein belongs to the KdpA family. In terms of assembly, the system is composed of three essential subunits: KdpA, KdpB and KdpC.

It is found in the cell inner membrane. Part of the high-affinity ATP-driven potassium transport (or Kdp) system, which catalyzes the hydrolysis of ATP coupled with the electrogenic transport of potassium into the cytoplasm. This subunit binds the periplasmic potassium ions and delivers the ions to the membrane domain of KdpB through an intramembrane tunnel. The protein is Potassium-transporting ATPase potassium-binding subunit of Polynucleobacter asymbioticus (strain DSM 18221 / CIP 109841 / QLW-P1DMWA-1) (Polynucleobacter necessarius subsp. asymbioticus).